The primary structure comprises 457 residues: MREIVHIQAGQCGNQIGAKFWEVISEEHGIDSSGAYNGTSDLQLDRAEVYYNEGSGGRYVPRAVLVDLEPGVLDTIKAGPHGGLYRPDNFVAGQSGAGNNWAKGHYTEGAELVDSVLDVVRREAEGCDCLQGFQVTHSLGGGTGSGMGTLLVSKIREEFPDRMMCTYSVMPSPKVSDTVVEPYNCTLSVHQLVENADAVFCIDNEALYNICYNTLKKPEPAYPDLNKLVSGVMSGITSSLRFPGQLNSDLRKLAVNLVPFPRLHFFMIGYAPLSADGVTAYRAKTVADLTKQMFDPKNMMADCDPRNGRYLTASAYFRGHVSTKEVEEQMDAIQTKNSGQFIDWIPNAIKASVCDVAPTGETMSAAFIGNSTAIQDIFKRVGSHFSAMFKRKAFLHWYTGEGMDEMEFTEAESNMNDLVSELQQYEAATVEGEEEEDAYAEGAVVNGDQSYEDQYAA.

GTP-binding residues include glutamine 11, glutamate 69, serine 138, glycine 142, threonine 143, glycine 144, asparagine 204, and asparagine 226. A Mg(2+)-binding site is contributed by glutamate 69. Positions 431-457 are disordered; it reads EGEEEEDAYAEGAVVNGDQSYEDQYAA.

It belongs to the tubulin family. Dimer of alpha and beta chains. A typical microtubule is a hollow water-filled tube with an outer diameter of 25 nm and an inner diameter of 15 nM. Alpha-beta heterodimers associate head-to-tail to form protofilaments running lengthwise along the microtubule wall with the beta-tubulin subunit facing the microtubule plus end conferring a structural polarity. Microtubules usually have 13 protofilaments but different protofilament numbers can be found in some organisms and specialized cells. Requires Mg(2+) as cofactor.

Its subcellular location is the cytoplasm. It localises to the cytoskeleton. In terms of biological role, tubulin is the major constituent of microtubules, a cylinder consisting of laterally associated linear protofilaments composed of alpha- and beta-tubulin heterodimers. Microtubules grow by the addition of GTP-tubulin dimers to the microtubule end, where a stabilizing cap forms. Below the cap, tubulin dimers are in GDP-bound state, owing to GTPase activity of alpha-tubulin. The polypeptide is Tubulin beta chain (TUBB1) (Porphyra purpurea (Red seaweed)).